The chain runs to 406 residues: Calsequestrin-2 (406 aa).

The signal sequence occupies residues 1-19 (MKATCWILAGFCLLFCCKA). A glycan (N-linked (GlcNAc...) asparagine) is linked at Asn335. Residues 365-406 (VLSGKINTEDDDDDDDDDDDDDDDDDDDDDDDDDDDDDDDDD) form a disordered region. The segment covering 373 to 406 (EDDDDDDDDDDDDDDDDDDDDDDDDDDDDDDDDD) has biased composition (acidic residues).

This sequence belongs to the calsequestrin family. As to expression, skeletal and heart muscle.

The protein localises to the sarcoplasmic reticulum lumen. In terms of biological role, calsequestrin is a high-capacity, moderate affinity, calcium-binding protein and thus acts as an internal calcium store in muscle. Calcium ions are bound by clusters of acidic residues at the protein surface, especially at the interface between subunits. Can bind around 60 Ca(2+) ions. Regulates the release of lumenal Ca(2+) via the calcium release channel RYR2; this plays an important role in triggering muscle contraction. Plays a role in excitation-contraction coupling in the heart and in regulating the rate of heart beats. The polypeptide is Calsequestrin-2 (CASQ2) (Gallus gallus (Chicken)).